Reading from the N-terminus, the 89-residue chain is Small ribosomal subunit protein uS15 (89 aa).

Belongs to the universal ribosomal protein uS15 family. As to quaternary structure, part of the 30S ribosomal subunit. Forms a bridge to the 50S subunit in the 70S ribosome, contacting the 23S rRNA.

In terms of biological role, one of the primary rRNA binding proteins, it binds directly to 16S rRNA where it helps nucleate assembly of the platform of the 30S subunit by binding and bridging several RNA helices of the 16S rRNA. Its function is as follows. Forms an intersubunit bridge (bridge B4) with the 23S rRNA of the 50S subunit in the ribosome. This chain is Small ribosomal subunit protein uS15, found in Pseudomonas fluorescens (strain ATCC BAA-477 / NRRL B-23932 / Pf-5).